A 405-amino-acid polypeptide reads, in one-letter code: Tryptophan synthase beta chain (405 aa).

Lys98 bears the N6-(pyridoxal phosphate)lysine mark.

It belongs to the TrpB family. In terms of assembly, tetramer of two alpha and two beta chains. The cofactor is pyridoxal 5'-phosphate.

The catalysed reaction is (1S,2R)-1-C-(indol-3-yl)glycerol 3-phosphate + L-serine = D-glyceraldehyde 3-phosphate + L-tryptophan + H2O. It participates in amino-acid biosynthesis; L-tryptophan biosynthesis; L-tryptophan from chorismate: step 5/5. The beta subunit is responsible for the synthesis of L-tryptophan from indole and L-serine. The protein is Tryptophan synthase beta chain of Xanthomonas axonopodis pv. citri (strain 306).